The following is a 281-amino-acid chain: Inhibitor of growth protein 2 (281 aa).

Residues 49 to 101 are a coiled coil; that stretch reads VLRELDNKYQETLKEIDDVYEKYKKEDDSNQKKRLQQHLQRALINSQELGDEK. Residues 123–204 are disordered; sequence SQCFQDPAES…AKQEREASPV (82 aa). A compositionally biased stretch (basic and acidic residues) spans 131-141; that stretch reads ESERASDKSKM. The segment covering 182-194 has biased composition (basic residues); that stretch reads KRSKSAKKKKRSK. Lys196 is covalently cross-linked (Glycyl lysine isopeptide (Lys-Gly) (interchain with G-Cter in SUMO1)). The segment at 213-262 adopts a PHD-type zinc-finger fold; the sequence is PTYCLCNQVSYGEMIGCDNEQCPIEWFHFSCVSLTYKPKGKWYCPKCRGD. Cys216, Cys218, Cys229, Cys234, His240, Cys243, Cys256, and Cys259 together coordinate Zn(2+). Over residues 261-275 the composition is skewed to basic and acidic residues; the sequence is GDNEKTMDKSTEKTK. The segment at 261–281 is disordered; it reads GDNEKTMDKSTEKTKKERRAR. Positions 265–281 are PBR; the sequence is KTMDKSTEKTKKERRAR.

It belongs to the ING family. As to quaternary structure, interacts with H3K4me3 and to a lesser extent with H3K4me2. Component of a mSin3A-like complex at least consisting of SIN3A, HDAC1, HDAC2, RBBP4/RbAp48, RBBP7/RbAp46, SAP30 and ING2. Post-translationally, sumoylation enhances its association with SIN3A and is required for binding to some target gene promoters, this is the case for TMEM71.

It localises to the nucleus. Functionally, seems to be involved in p53/TP53 activation and p53/TP53-dependent apoptotic pathways, probably by enhancing acetylation of p53/TP53. Component of a mSin3A-like corepressor complex, which is probably involved in deacetylation of nucleosomal histones. ING2 activity seems to be modulated by binding to phosphoinositides (PtdInsPs). The protein is Inhibitor of growth protein 2 (Ing2) of Mus musculus (Mouse).